Here is a 239-residue protein sequence, read N- to C-terminus: Fibroblast growth factor 3 (239 aa).

The N-terminal stretch at 1–17 (MGLIWLLLLSLLEPGWP) is a signal peptide. Asn-65 is a glycosylation site (N-linked (GlcNAc...) asparagine). The segment at 193–239 (QLQSGLPRPPGKGVQPRRRRQKQSPDNLEPSHVQASRLGSQLEASAH) is disordered. Positions 225-239 (VQASRLGSQLEASAH) are enriched in polar residues.

Belongs to the heparin-binding growth factors family. In terms of assembly, interacts with FGFR1 and FGFR2. Affinity between fibroblast growth factors (FGFs) and their receptors is increased by heparan sulfate glycosaminoglycans that function as coreceptors.

The protein localises to the secreted. Functionally, plays an important role in the regulation of embryonic development, cell proliferation, and cell differentiation. Required for normal ear development. This chain is Fibroblast growth factor 3 (FGF3), found in Homo sapiens (Human).